The chain runs to 185 residues: Ribosome-recycling factor (185 aa).

It belongs to the RRF family.

The protein resides in the cytoplasm. In terms of biological role, responsible for the release of ribosomes from messenger RNA at the termination of protein biosynthesis. May increase the efficiency of translation by recycling ribosomes from one round of translation to another. The polypeptide is Ribosome-recycling factor (Streptococcus pneumoniae (strain 70585)).